Consider the following 635-residue polypeptide: Threonine--tRNA ligase (635 aa).

Residues 1–58 (MIQVTCDQKNYEVLEGTTAAELAKQLKNSHQFIGVLINERPRDLSTHLNEGDTLVFLT) enclose the TGS domain. The interval 237–528 (DHRVLGAKLD…LIENFKGRFP (292 aa)) is catalytic. Zn(2+) is bound by residues Cys328, His379, and His505.

It belongs to the class-II aminoacyl-tRNA synthetase family. Homodimer. It depends on Zn(2+) as a cofactor.

The protein localises to the cytoplasm. It catalyses the reaction tRNA(Thr) + L-threonine + ATP = L-threonyl-tRNA(Thr) + AMP + diphosphate + H(+). Functionally, catalyzes the attachment of threonine to tRNA(Thr) in a two-step reaction: L-threonine is first activated by ATP to form Thr-AMP and then transferred to the acceptor end of tRNA(Thr). Also edits incorrectly charged L-seryl-tRNA(Thr). This is Threonine--tRNA ligase from Chlamydia pneumoniae (Chlamydophila pneumoniae).